A 497-amino-acid chain; its full sequence is Bloodstream-specific protein 2 (497 aa).

The first 14 residues, 1 to 14, serve as a signal peptide directing secretion; that stretch reads MRAIFLVALALATM. The Thioredoxin 1 domain maps to 15–124; sequence RESTAESLKL…IIKYIKANVG (110 aa). N-linked (GlcNAc...) asparagine glycosylation is present at asparagine 30. An intrachain disulfide couples cysteine 48 to cysteine 51. N-linked (GlcNAc...) asparagine glycosylation is found at asparagine 63, asparagine 85, asparagine 153, asparagine 154, asparagine 250, and asparagine 278. The Thioredoxin 2 domain occupies 334-455; the sequence is EPTIKSLPVP…VYEFVRKHVT (122 aa). Active-site nucleophile residues include cysteine 378 and cysteine 381. An intrachain disulfide couples cysteine 378 to cysteine 381. Asparagine 413, asparagine 465, asparagine 476, asparagine 482, asparagine 485, and asparagine 488 each carry an N-linked (GlcNAc...) asparagine glycan. The disordered stretch occupies residues 461–497; sequence EKPANVTEEKKSEEENKSSKSNESNDSNESNVDKQDL. The segment covering 467 to 480 has biased composition (basic and acidic residues); that stretch reads TEEKKSEEENKSSK. Low complexity predominate over residues 481–490; sequence SNESNDSNES.

Belongs to the protein disulfide isomerase family.

The polypeptide is Bloodstream-specific protein 2 (BS2) (Trypanosoma brucei brucei).